The sequence spans 287 residues: Small ribosomal subunit protein uS2 (287 aa).

The disordered stretch occupies residues 233 to 287 (HKAPQDDIEPMAEWEKQLLQSGDSSGETRPISGTDRPLDGDLSKGPAPQDEELSD). Residues 250–259 (LLQSGDSSGE) are compositionally biased toward polar residues.

This sequence belongs to the universal ribosomal protein uS2 family.

This chain is Small ribosomal subunit protein uS2, found in Tropheryma whipplei (strain TW08/27) (Whipple's bacillus).